The chain runs to 136 residues: Large ribosomal subunit protein uL16 (136 aa).

Belongs to the universal ribosomal protein uL16 family. In terms of assembly, part of the 50S ribosomal subunit.

Binds 23S rRNA and is also seen to make contacts with the A and possibly P site tRNAs. The chain is Large ribosomal subunit protein uL16 from Enterobacter sp. (strain 638).